A 72-amino-acid polypeptide reads, in one-letter code: ATP synthase subunit c (72 aa).

2 helical membrane-spanning segments follow: residues 4–24 (ALGA…GMGI) and 46–66 (LLFI…LIAF).

Belongs to the ATPase C chain family. F-type ATPases have 2 components, F(1) - the catalytic core - and F(0) - the membrane proton channel. F(1) has five subunits: alpha(3), beta(3), gamma(1), delta(1), epsilon(1). F(0) has three main subunits: a(1), b(2) and c(10-14). The alpha and beta chains form an alternating ring which encloses part of the gamma chain. F(1) is attached to F(0) by a central stalk formed by the gamma and epsilon chains, while a peripheral stalk is formed by the delta and b chains.

It is found in the cell membrane. Functionally, f(1)F(0) ATP synthase produces ATP from ADP in the presence of a proton or sodium gradient. F-type ATPases consist of two structural domains, F(1) containing the extramembraneous catalytic core and F(0) containing the membrane proton channel, linked together by a central stalk and a peripheral stalk. During catalysis, ATP synthesis in the catalytic domain of F(1) is coupled via a rotary mechanism of the central stalk subunits to proton translocation. Key component of the F(0) channel; it plays a direct role in translocation across the membrane. A homomeric c-ring of between 10-14 subunits forms the central stalk rotor element with the F(1) delta and epsilon subunits. The chain is ATP synthase subunit c from Syntrophomonas wolfei subsp. wolfei (strain DSM 2245B / Goettingen).